Consider the following 555-residue polypeptide: MKRKWEATLKQIEERASHYERKPLSSVYRPRLSKPEEPPSIWKLFHRQTQAFNFVKSCKQEVHVFALECKVGDGQRIYLVTTYTQLWFYYKSRRNLLHCYEVIPENAVCKLYFDLEFNKLANPGADGKKMVALLIEHVCKALQEFYTVNCSAEDVLNLDSSTEEKFSRHLIFQLHDVAFKDNIHVGNFVRKILQPAFHLIASEDEDMTPETTGHEFTHFSETPSEQGTCFSKMSTDIDVGESQTSNSEKLGRLGSAQQSSPDLSFLIVKNDMGEKRLFVDLGVYTRNRNFRLYKSSKIGKYVALEVAEDNKFFPIQSKNISKENQYFLSSLVSNVRFSDALRILTCDVPQSKQRVQCFSRTGTSVEAIEGFQCSPYPEIDQFVLSLVNKNGIKGGIRRWNYFFPEELLVYDICKYRWCENIGRAHRSNNIMILVDLKNEVWYQKCHDPVCKAENFKSDCFPLPAEVCLLSLLKEGEEFTTDTTADTETKSPHGPSSSVLSKGAFSDADWDNGIDDTYILEATEDAELAEAAENSLLAYNRMDEIPDELLIEVLQE.

Positions 1 to 22 (MKRKWEATLKQIEERASHYERK) form a coiled coil. Substrate contacts are provided by residues R76, 114–116 (DLE), and 165–169 (KFSRH). The Mn(2+) site is built by D114 and E116. A disordered region spans residues 210–230 (ETTGHEFTHFSETPSEQGTCF). A compositionally biased stretch (polar residues) spans 219–230 (FSETPSEQGTCF). S255 bears the Phosphoserine mark. Substrate is bound by residues 288–291 (RNFR) and K297. Positions 418, 425, 445, and 450 each coordinate Zn(2+). The Zinc knuckle motif motif lies at 418-451 (CENIGRAHRSNNIMILVDLKNEVWYQKCHDPVCK). A disordered region spans residues 480–503 (TDTTADTETKSPHGPSSSVLSKGA). The tract at residues 480-555 (TDTTADTETK…DELLIEVLQE (76 aa)) is interaction with RPA1. 2 short sequence motifs (RPA1-binding motif) span residues 509–523 (WDNG…EATE) and 543–551 (EIPDELLIE).

The protein belongs to the eukaryotic-type primase small subunit family. In terms of assembly, interacts with RPA1; leading to recruitment to chromatin and stimulate DNA primase activity. Interacts with SSBP1. Interacts with POLDIP2; leading to enhance DNA polymerase activity. It depends on Mn(2+) as a cofactor.

Its subcellular location is the nucleus. It localises to the mitochondrion matrix. It is found in the chromosome. The catalysed reaction is ssDNA + n NTP = ssDNA/pppN(pN)n-1 hybrid + (n-1) diphosphate.. It carries out the reaction DNA(n) + a 2'-deoxyribonucleoside 5'-triphosphate = DNA(n+1) + diphosphate. Its function is as follows. DNA primase and DNA polymerase required to tolerate replication-stalling lesions by bypassing them. Required to facilitate mitochondrial and nuclear replication fork progression by initiating de novo DNA synthesis using dNTPs and acting as an error-prone DNA polymerase able to bypass certain DNA lesions. Shows a high capacity to tolerate DNA damage lesions such as 8oxoG and abasic sites in DNA. Provides different translesion synthesis alternatives when DNA replication is stalled: able to synthesize DNA primers downstream of lesions, such as ultraviolet (UV) lesions, R-loops and G-quadruplexes, to allow DNA replication to continue. Can also realign primers ahead of 'unreadable lesions' such as abasic sites and 6-4 photoproduct (6-4 pyrimidine-pyrimidinone), thereby skipping the lesion. Repriming avoids fork degradation while leading to accumulation of internal ssDNA gaps behind the forks. Also able to incorporate nucleotides opposite DNA lesions such as 8oxoG, like a regular translesion synthesis DNA polymerase. Also required for reinitiating stalled forks after UV damage during nuclear DNA replication. Required for mitochondrial DNA (mtDNA) synthesis and replication, by reinitiating synthesis after UV damage or in the presence of chain-terminating nucleotides. Prevents APOBEC family-mediated DNA mutagenesis by repriming downstream of abasic site to prohibit error-prone translesion synthesis. Has non-overlapping function with POLH. In addition to its role in DNA damage response, also required to maintain efficient nuclear and mitochondrial DNA replication in unperturbed cells. This Bos taurus (Bovine) protein is DNA-directed primase/polymerase protein.